A 282-amino-acid chain; its full sequence is Bifunctional protein FolD (282 aa).

NADP(+) is bound by residues 164 to 166, isoleucine 189, and isoleucine 230; that span reads GAS.

This sequence belongs to the tetrahydrofolate dehydrogenase/cyclohydrolase family. In terms of assembly, homodimer.

It catalyses the reaction (6R)-5,10-methylene-5,6,7,8-tetrahydrofolate + NADP(+) = (6R)-5,10-methenyltetrahydrofolate + NADPH. It carries out the reaction (6R)-5,10-methenyltetrahydrofolate + H2O = (6R)-10-formyltetrahydrofolate + H(+). Its pathway is one-carbon metabolism; tetrahydrofolate interconversion. Catalyzes the oxidation of 5,10-methylenetetrahydrofolate to 5,10-methenyltetrahydrofolate and then the hydrolysis of 5,10-methenyltetrahydrofolate to 10-formyltetrahydrofolate. The protein is Bifunctional protein FolD of Campylobacter jejuni subsp. jejuni serotype O:2 (strain ATCC 700819 / NCTC 11168).